We begin with the raw amino-acid sequence, 320 residues long: Heterogeneous nuclear ribonucleoprotein A1-like 3 (320 aa).

2 RRM domains span residues 14–97 and 105–184; these read RKLF…DSQR and KKIF…LSKQ. Disordered regions lie at residues 182-218 and 271-320; these read SKQEMASASSSQRGRSGSGNFGGGRGGGFGGNDNFGR and SNFG…GRRF. Residues 197–218 show a composition bias toward gly residues; it reads SGSGNFGGGRGGGFGGNDNFGR. The span at 308–320 shows a compositional bias: low complexity; that stretch reads SSSSSSYGSGRRF.

This is Heterogeneous nuclear ribonucleoprotein A1-like 3 from Homo sapiens (Human).